We begin with the raw amino-acid sequence, 335 residues long: Cathepsin B-like cysteine proteinase 4 (335 aa).

The first 15 residues, 1-15 (MKYLILAALVAVTAG), serve as a signal peptide directing secretion. Residues 16–80 (LVIPLVPKTQ…VVKHDINEDT (65 aa)) constitute a propeptide that is removed on maturation. Disulfide bonds link C94/C123, C106/C150, C142/C209, C143/C146, C179/C213, and C187/C199. Residue C109 is part of the active site. An N-linked (GlcNAc...) asparagine glycan is attached at N193. Residues H281 and N301 contribute to the active site.

It belongs to the peptidase C1 family.

The protein localises to the secreted. In terms of biological role, thiol protease which shows activity against the fluorogenic substrate z-Arg-Arg-AMC. The polypeptide is Cathepsin B-like cysteine proteinase 4 (cpr-4) (Caenorhabditis elegans).